The chain runs to 187 residues: ATP synthase subunit b 2 (187 aa).

Residues 1 to 12 (MAQERAEHESAD) show a composition bias toward basic and acidic residues. The segment at 1-31 (MAQERAEHESADQHTTSTGVPHEGQGEPFPP) is disordered. Residues 40 to 60 (LLIWLAISFLLLYALMSKLVL) form a helical membrane-spanning segment.

This sequence belongs to the ATPase B chain family. F-type ATPases have 2 components, F(1) - the catalytic core - and F(0) - the membrane proton channel. F(1) has five subunits: alpha(3), beta(3), gamma(1), delta(1), epsilon(1). F(0) has three main subunits: a(1), b(2) and c(10-14). The alpha and beta chains form an alternating ring which encloses part of the gamma chain. F(1) is attached to F(0) by a central stalk formed by the gamma and epsilon chains, while a peripheral stalk is formed by the delta and b chains.

The protein localises to the cell inner membrane. F(1)F(0) ATP synthase produces ATP from ADP in the presence of a proton or sodium gradient. F-type ATPases consist of two structural domains, F(1) containing the extramembraneous catalytic core and F(0) containing the membrane proton channel, linked together by a central stalk and a peripheral stalk. During catalysis, ATP synthesis in the catalytic domain of F(1) is coupled via a rotary mechanism of the central stalk subunits to proton translocation. Its function is as follows. Component of the F(0) channel, it forms part of the peripheral stalk, linking F(1) to F(0). The b'-subunit is a diverged and duplicated form of b found in plants and photosynthetic bacteria. The polypeptide is ATP synthase subunit b 2 (atpF2) (Beijerinckia indica subsp. indica (strain ATCC 9039 / DSM 1715 / NCIMB 8712)).